The chain runs to 376 residues: Chaperone protein DnaJ (376 aa).

The region spanning 4 to 70 (DYYQILGVSK…QKRAAYDRFG (67 aa)) is the J domain. The CR-type zinc-finger motif lies at 139-217 (GVEKNISFSS…CHGLGRYHKQ (79 aa)). Cysteine 152, cysteine 155, cysteine 169, cysteine 172, cysteine 191, cysteine 194, cysteine 205, and cysteine 208 together coordinate Zn(2+). CXXCXGXG motif repeat units follow at residues 152–159 (CDTCHGSG), 169–176 (CDACGGVG), 191–198 (CHKCQGNG), and 205–212 (CKKCHGLG).

The protein belongs to the DnaJ family. Homodimer. Zn(2+) serves as cofactor.

The protein resides in the cytoplasm. Participates actively in the response to hyperosmotic and heat shock by preventing the aggregation of stress-denatured proteins and by disaggregating proteins, also in an autonomous, DnaK-independent fashion. Unfolded proteins bind initially to DnaJ; upon interaction with the DnaJ-bound protein, DnaK hydrolyzes its bound ATP, resulting in the formation of a stable complex. GrpE releases ADP from DnaK; ATP binding to DnaK triggers the release of the substrate protein, thus completing the reaction cycle. Several rounds of ATP-dependent interactions between DnaJ, DnaK and GrpE are required for fully efficient folding. Also involved, together with DnaK and GrpE, in the DNA replication of plasmids through activation of initiation proteins. In Rickettsia bellii (strain RML369-C), this protein is Chaperone protein DnaJ.